A 132-amino-acid polypeptide reads, in one-letter code: Small ribosomal subunit protein uS8c (132 aa).

This sequence belongs to the universal ribosomal protein uS8 family. Part of the 30S ribosomal subunit.

Its subcellular location is the plastid. It is found in the chloroplast. In terms of biological role, one of the primary rRNA binding proteins, it binds directly to 16S rRNA central domain where it helps coordinate assembly of the platform of the 30S subunit. In Psilotum nudum (Whisk fern), this protein is Small ribosomal subunit protein uS8c (rps8).